A 66-amino-acid polypeptide reads, in one-letter code: Large ribosomal subunit protein bL33c (66 aa).

It belongs to the bacterial ribosomal protein bL33 family.

The protein resides in the plastid. Its subcellular location is the chloroplast. The chain is Large ribosomal subunit protein bL33c from Illicium oligandrum (Star anise).